The chain runs to 187 residues: Meiotically up-regulated gene 155 protein (187 aa).

The tract at residues methionine 1–aspartate 24 is disordered. Transmembrane regions (helical) follow at residues isoleucine 83 to histidine 105 and valine 163 to phenylalanine 183.

Its subcellular location is the cytoplasm. It is found in the nucleus membrane. Its function is as follows. Has a role in meiosis. The chain is Meiotically up-regulated gene 155 protein (mug155) from Schizosaccharomyces pombe (strain 972 / ATCC 24843) (Fission yeast).